The chain runs to 194 residues: MGVAPVSNQPLVAQQPKGIIDPSTGKPIGSNDPFFGEINNELADKGFLVTSTDELINWARTGSLMWMTFGLACCAVEMMQLSMPRYDVERFGFAPRASPRQSDVMIVAGTLTNKMAPALRKVYDQMPEPRYVISMGSCANGGGYYHYSYSVVRGCDRIVPIDIYVPGCPPTAEALLYGVLLLQKKIRRTGTIER.

[4Fe-4S] cluster-binding residues include Cys73, Cys74, Cys138, and Cys168.

Belongs to the complex I 20 kDa subunit family. In terms of assembly, NDH-1 is composed of 14 different subunits. Subunits NuoB, C, D, E, F, and G constitute the peripheral sector of the complex. [4Fe-4S] cluster serves as cofactor.

It is found in the cell inner membrane. It catalyses the reaction a quinone + NADH + 5 H(+)(in) = a quinol + NAD(+) + 4 H(+)(out). Functionally, NDH-1 shuttles electrons from NADH, via FMN and iron-sulfur (Fe-S) centers, to quinones in the respiratory chain. The immediate electron acceptor for the enzyme in this species is believed to be ubiquinone. Couples the redox reaction to proton translocation (for every two electrons transferred, four hydrogen ions are translocated across the cytoplasmic membrane), and thus conserves the redox energy in a proton gradient. The sequence is that of NADH-quinone oxidoreductase subunit B from Rhizobium johnstonii (strain DSM 114642 / LMG 32736 / 3841) (Rhizobium leguminosarum bv. viciae).